Consider the following 165-residue polypeptide: Protein SprT (165 aa).

Residues 10–158 enclose the SprT-like domain; it reads EACYRQAEHF…CRRCKATLVF (149 aa). Residue His-69 participates in Zn(2+) binding. The active site involves Glu-70. Residue His-73 coordinates Zn(2+).

This sequence belongs to the SprT family. Zn(2+) serves as cofactor.

It is found in the cytoplasm. This is Protein SprT from Pseudomonas aeruginosa (strain LESB58).